We begin with the raw amino-acid sequence, 571 residues long: Vesicle-associated protein 1-4 (571 aa).

The region spanning 1–126 (MSTDELLTFD…EETIFKIIYV (126 aa)) is the MSP 1 domain. The disordered stretch occupies residues 132–154 (QSPVQEGLEDGSSPSASVSDKGN). Positions 143–153 (SSPSASVSDKG) are enriched in polar residues. The 121-residue stretch at 176 to 296 (LLIIDPVDVQ…EETRLKVMYV (121 aa)) folds into the MSP 2 domain. Positions 297-322 (TPPQPPSPVQEGTEEGSSPRASVSDN) are disordered. The span at 311–322 (EGSSPRASVSDN) shows a compositional bias: polar residues. The TIR domain maps to 356 to 493 (PQYQVFINFR…KWKEALSSVF (138 aa)). Glutamate 430 is an active-site residue.

The protein belongs to the VAMP-associated protein (VAP) (TC 9.B.17) family.

It carries out the reaction NAD(+) + H2O = ADP-D-ribose + nicotinamide + H(+). In terms of biological role, may play a role in vesicle trafficking. This is Vesicle-associated protein 1-4 (PVA14) from Arabidopsis thaliana (Mouse-ear cress).